Here is a 303-residue protein sequence, read N- to C-terminus: UDP-3-O-acyl-N-acetylglucosamine deacetylase (303 aa).

Zn(2+) is bound by residues H78, H237, and D241. Residue H264 is the Proton donor of the active site.

Belongs to the LpxC family. The cofactor is Zn(2+).

It carries out the reaction a UDP-3-O-[(3R)-3-hydroxyacyl]-N-acetyl-alpha-D-glucosamine + H2O = a UDP-3-O-[(3R)-3-hydroxyacyl]-alpha-D-glucosamine + acetate. The protein operates within glycolipid biosynthesis; lipid IV(A) biosynthesis; lipid IV(A) from (3R)-3-hydroxytetradecanoyl-[acyl-carrier-protein] and UDP-N-acetyl-alpha-D-glucosamine: step 2/6. Catalyzes the hydrolysis of UDP-3-O-myristoyl-N-acetylglucosamine to form UDP-3-O-myristoylglucosamine and acetate, the committed step in lipid A biosynthesis. This Coxiella burnetii (strain CbuK_Q154) (Coxiella burnetii (strain Q154)) protein is UDP-3-O-acyl-N-acetylglucosamine deacetylase.